The primary structure comprises 3527 residues: BEACH domain-containing protein A2 (3527 aa).

Disordered regions lie at residues 25–46 (AGEAISDPTTPPSSSQASPSSS), 385–423 (SSPHKNRGSNDSKKQPPLSLKTRQNDDSEKQQSLSLNSR), and 454–490 (ESSGTSTSLLSQTKLTGYSRRQTPSANNRYDEPCEQG). Positions 28 to 46 (AISDPTTPPSSSQASPSSS) are enriched in low complexity. Residues 455–469 (SSGTSTSLLSQTKLT) show a composition bias toward low complexity. The segment covering 472–481 (SRRQTPSANN) has biased composition (polar residues). LRR repeat units follow at residues 1447–1470 (KLESGQTTISMSPTEIIPENNYED), 1499–1522 (FSHLSELEMGDNPVETSNCIVLSN), 1542–1565 (SIQIASLGFLENLISILWYRSHNL), 1566–1588 (AILRQINLVKHLLVTLQRGDVEV), and 2001–2024 (SSEMKSLDLTGSSSQVQPIDSRSS). 2 disordered regions span residues 1992–2023 (GDHVGSVSASSEMKSLDLTGSSSQVQPIDSRS) and 2046–2081 (IPSPSKSSTISTPHPSHISVSEFDASSDQSSGSQGS). Polar residues predominate over residues 1998 to 2020 (VSASSEMKSLDLTGSSSQVQPID). LRR repeat units follow at residues 2128 to 2151 (TEQIKAVQALESILEMLPLYVDPE), 2221 to 2247 (LLSILQLANKDGRVEEVTSSGKGLLSI), and 2313 to 2336 (VSAVLQLLVANKNIILCPSNLDTD). The disordered stretch occupies residues 2658-2680 (VNTDEKSETGSPIKSSSGKMDEI). The span at 2666–2675 (TGSPIKSSSG) shows a compositional bias: polar residues. The BEACH-type PH domain maps to 2704-2871 (EHLEKIRFRY…EREEVFRNLL (168 aa)). The BEACH domain maps to 2896-3188 (GSRLFKLMAK…QLFQKPHVKR (293 aa)). WD repeat units lie at residues 3272 to 3311 (HEGNQIQCAGVSHDGRIVVTGAEDGLVSVWRVSKDGPRGS), 3322 to 3361 (AHTAKVICLRVSQPYMMIASSSDDCTVIIWDLSSLSFVRQ), 3410 to 3451 (DLIV…DPVS), and 3483 to 3522 (FHKQPVTSLHLTTDLKQLLSGDSAGHLLSWTVPDEILKAS).

The sequence is that of BEACH domain-containing protein A2 from Arabidopsis thaliana (Mouse-ear cress).